The sequence spans 432 residues: Trigger factor (432 aa).

The PPIase FKBP-type domain maps to 163-248 (GDVVVLDFAA…VHAVKERRLP (86 aa)).

Belongs to the FKBP-type PPIase family. Tig subfamily.

It localises to the cytoplasm. It catalyses the reaction [protein]-peptidylproline (omega=180) = [protein]-peptidylproline (omega=0). In terms of biological role, involved in protein export. Acts as a chaperone by maintaining the newly synthesized protein in an open conformation. Functions as a peptidyl-prolyl cis-trans isomerase. The protein is Trigger factor of Nitratidesulfovibrio vulgaris (strain DSM 19637 / Miyazaki F) (Desulfovibrio vulgaris).